Here is a 408-residue protein sequence, read N- to C-terminus: Imidazolonepropionase (408 aa).

Fe(3+) is bound by residues His73 and His75. His73 and His75 together coordinate Zn(2+). 4-imidazolone-5-propanoate is bound by residues Arg82, Tyr145, and His178. Residue Tyr145 participates in N-formimidoyl-L-glutamate binding. His243 is a Fe(3+) binding site. Residue His243 coordinates Zn(2+). Gln246 lines the 4-imidazolone-5-propanoate pocket. Asp318 lines the Fe(3+) pocket. Asp318 contacts Zn(2+). Residues Asn320 and Gly322 each contribute to the N-formimidoyl-L-glutamate site. A 4-imidazolone-5-propanoate-binding site is contributed by Ser323.

The protein belongs to the metallo-dependent hydrolases superfamily. HutI family. Zn(2+) is required as a cofactor. Fe(3+) serves as cofactor.

It localises to the cytoplasm. The catalysed reaction is 4-imidazolone-5-propanoate + H2O = N-formimidoyl-L-glutamate. The protein operates within amino-acid degradation; L-histidine degradation into L-glutamate; N-formimidoyl-L-glutamate from L-histidine: step 3/3. Its function is as follows. Catalyzes the hydrolytic cleavage of the carbon-nitrogen bond in imidazolone-5-propanoate to yield N-formimidoyl-L-glutamate. It is the third step in the universal histidine degradation pathway. The protein is Imidazolonepropionase of Shewanella woodyi (strain ATCC 51908 / MS32).